The primary structure comprises 370 residues: Luciferin sulfotransferase (370 aa).

A 3'-phosphoadenylyl sulfate-binding site is contributed by 90-95 (KAGTTW). His165 functions as the Proton acceptor in the catalytic mechanism. 3'-phosphoadenylyl sulfate contacts are provided by residues Arg189, Ser197, Tyr250, 284 to 289 (LSFESM), and 316 to 320 (FMRSG).

It belongs to the sulfotransferase 1 family.

The catalysed reaction is firefly D-luciferin + 3'-phosphoadenylyl sulfate = firefly D-sulfoluciferin + adenosine 3',5'-bisphosphate + H(+). It catalyses the reaction firefly L-luciferin + 3'-phosphoadenylyl sulfate = firefly L-sulfoluciferin + adenosine 3',5'-bisphosphate + H(+). Sulfoluciferin formation is inhibited by the product adenosine 3',5'-bisphosphate. In terms of biological role, catalyzes the production of firefly sulfoluciferin from luciferin using the sulfo-donor 3'-phosphoadenylyl sulfate (PAPS). Is also able to catalyze the reverse reaction, i.e. the adenosine 3',5'-bisphosphate-dependent desulfonation of sulfoluciferin. Can use either D- or L-luciferin stereoisomer as substrate. Sulfoluciferin, which is not a substrate of P.pyralis luciferase, likely serves as a luciferin storage form in fireflies. The protein is Luciferin sulfotransferase of Photinus pyralis (Common eastern firefly).